A 496-amino-acid chain; its full sequence is MLKIKLEKTTFENAKAECSLVFIINKDFSHAWVKNKELLETFKYEGEGVFLDQENKILYAGVKEDDVHLLRESACLAVRTLKKLAFKSVKVGVYTCGAHSKDNALLENLKALFLGLKLGLYEYDTFKSNKKESVLKEAIVALELHKPCEKTCANSLEKSAKEALKYAEIMTESLNIVKDLVNTPPMIGTPVYMAEVAQKVAKENHLEIHVHDEKFLEEKKMNAFLAVNKASLSVNPPRLIHLVYKPKKAKKKIALVGKGLTYDCGGLSLKPADYMVTMKADKGGGSAVIGLLNALAKLGVEAEVHGIIGATENMIGPAAYKPDDILISKEGKSIEVRNTDAEGRLVLADCLSYAQDLNPDVIVDFATLTGACVVGLGEFTSAIMGHNEELKNLFETSGLESGELLAKLPFNRHLKKLIESKIADVCNISSSRYGGAITAGLFLNEFIRDEFKDKWLHIDIAGPAYVEKEWDVNSFGASGAGVRACTAFVEELLKKA.

Mn(2+)-binding residues include K258 and D263. K270 is an active-site residue. Residues D281, D340, and E342 each contribute to the Mn(2+) site. The active site involves R344.

The protein belongs to the peptidase M17 family. Mn(2+) is required as a cofactor.

It localises to the cytoplasm. It carries out the reaction Release of an N-terminal amino acid, Xaa-|-Yaa-, in which Xaa is preferably Leu, but may be other amino acids including Pro although not Arg or Lys, and Yaa may be Pro. Amino acid amides and methyl esters are also readily hydrolyzed, but rates on arylamides are exceedingly low.. It catalyses the reaction Release of an N-terminal amino acid, preferentially leucine, but not glutamic or aspartic acids.. Its function is as follows. Presumably involved in the processing and regular turnover of intracellular proteins. Catalyzes the removal of unsubstituted N-terminal amino acids from various peptides. This Helicobacter pylori (strain ATCC 700392 / 26695) (Campylobacter pylori) protein is Cytosol aminopeptidase (pepA).